The chain runs to 140 residues: Ribosomal RNA large subunit methyltransferase H (140 aa).

2 residues coordinate S-adenosyl-L-methionine: L55 and G87.

The protein belongs to the RNA methyltransferase RlmH family. As to quaternary structure, homodimer.

Its subcellular location is the cytoplasm. The catalysed reaction is pseudouridine(1915) in 23S rRNA + S-adenosyl-L-methionine = N(3)-methylpseudouridine(1915) in 23S rRNA + S-adenosyl-L-homocysteine + H(+). In terms of biological role, specifically methylates the pseudouridine at position 1915 (m3Psi1915) in 23S rRNA. The protein is Ribosomal RNA large subunit methyltransferase H of Erythrobacter litoralis (strain HTCC2594).